The primary structure comprises 312 residues: MGSNITSTSIIFLLTGVPGLEAFHTWISIPFCFLSVTALLGNSLILFATITQPSLHEPMYYFLSMLSATDLGLSISTLVTMLSIFWFNVREISFNACLSHMFFIKFFTVMESSVLLAMAFDRFVAVSNPLRYAMILTDSRIAQIGVASVIRGLLMLTPMVALLIRLSYCHSQVLHHSYCYHPDVMKLSCTDTRINSAVGLTAMFSTVGVDLLLILLSYVLIIRTVLSVASPEERKETFSTCVSHIVAFAIYYIPLISLSIVHRFGKQAPAYVHTMIANTYLLISPLMNPVIYSVKTKQIRRAVIKILHSKET.

The Extracellular portion of the chain corresponds to Met1–Trp26. The helical transmembrane segment at Ile27–Phe47 threads the bilayer. The Cytoplasmic portion of the chain corresponds to Ala48–Leu66. The helical transmembrane segment at Ser67–Phe87 threads the bilayer. Topologically, residues Asn88 to Ser99 are extracellular. Residues Cys97 and Cys179 are joined by a disulfide bond. Residues His100 to Phe120 traverse the membrane as a helical segment. Residues Asp121 to Gln143 are Cytoplasmic-facing. A helical membrane pass occupies residues Ile144 to Ile164. Residues Arg165–Thr201 lie on the Extracellular side of the membrane. The chain crosses the membrane as a helical span at residues Ala202–Ile222. The Cytoplasmic segment spans residues Arg223–Thr240. Residues Cys241 to Val261 traverse the membrane as a helical segment. The Extracellular segment spans residues His262–His273. The chain crosses the membrane as a helical span at residues Thr274–Val294. Residues Lys295–Thr312 are Cytoplasmic-facing.

Belongs to the G-protein coupled receptor 1 family.

It localises to the membrane. Functionally, odorant receptor. In Homo sapiens (Human), this protein is Olfactory receptor OR51C1.